A 336-amino-acid polypeptide reads, in one-letter code: F420-dependent glucose-6-phosphate dehydrogenase (336 aa).

Asp39 lines the coenzyme F420-(gamma-Glu)n pocket. The active-site Proton donor is His40. Coenzyme F420-(gamma-Glu)n is bound by residues Thr76 and Thr107–Gly108. Glu109 (proton acceptor) is an active-site residue. Residues Asn112, Gly177–Gly178, and Val180–Val181 each bind coenzyme F420-(gamma-Glu)n. 4 residues coordinate substrate: Thr195, Lys198, Lys259, and Arg283.

This sequence belongs to the F420-dependent glucose-6-phosphate dehydrogenase family. Homodimer.

It catalyses the reaction oxidized coenzyme F420-(gamma-L-Glu)(n) + D-glucose 6-phosphate + H(+) = 6-phospho-D-glucono-1,5-lactone + reduced coenzyme F420-(gamma-L-Glu)(n). In terms of biological role, catalyzes the coenzyme F420-dependent oxidation of glucose 6-phosphate (G6P) to 6-phosphogluconolactone. Appears to have a role in resistance to oxidative stress, via its consumption of G6P that serves as a source of reducing power to combat oxidative stress in mycobacteria. Cannot use NAD, NADP, FAD or FMN instead of coenzyme F420 as an electron acceptor. Exhibits nearly no activity with D-mannose-6-phosphate or D-fructose-6-phosphate as substrate. In Mycolicibacterium smegmatis (strain ATCC 700084 / mc(2)155) (Mycobacterium smegmatis), this protein is F420-dependent glucose-6-phosphate dehydrogenase (fgd).